The sequence spans 98 residues: NADH-ubiquinone oxidoreductase chain 4L (98 aa).

3 helical membrane-spanning segments follow: residues 1-21, 29-49, and 61-81; these read MPFI…GLLM, SLLC…LLCL, and MILL…LVMV.

This sequence belongs to the complex I subunit 4L family. As to quaternary structure, core subunit of respiratory chain NADH dehydrogenase (Complex I) which is composed of 45 different subunits.

Its subcellular location is the mitochondrion inner membrane. It carries out the reaction a ubiquinone + NADH + 5 H(+)(in) = a ubiquinol + NAD(+) + 4 H(+)(out). Core subunit of the mitochondrial membrane respiratory chain NADH dehydrogenase (Complex I) which catalyzes electron transfer from NADH through the respiratory chain, using ubiquinone as an electron acceptor. Part of the enzyme membrane arm which is embedded in the lipid bilayer and involved in proton translocation. The sequence is that of NADH-ubiquinone oxidoreductase chain 4L (MT-ND4L) from Dugong dugon (Dugong).